The primary structure comprises 156 residues: MPRKGNIAKRDVLADPVYNSKLVTKLINHLMIDGKKAKASSILYDAFGIIQDKTGKEPVEVFEEAMNNVMPVLEVKARRIGGSNYQIPVEVRPERRTTLGLRWLVSYARLRNEHTMDERLANEIMDAANNTGSAVKKREDVHRMAEANRAFAHYRF.

This sequence belongs to the universal ribosomal protein uS7 family. As to quaternary structure, part of the 30S ribosomal subunit. Contacts proteins S9 and S11.

Functionally, one of the primary rRNA binding proteins, it binds directly to 16S rRNA where it nucleates assembly of the head domain of the 30S subunit. Is located at the subunit interface close to the decoding center, probably blocks exit of the E-site tRNA. This Lactobacillus johnsonii (strain CNCM I-12250 / La1 / NCC 533) protein is Small ribosomal subunit protein uS7.